The chain runs to 61 residues: Large ribosomal subunit protein uL30 (61 aa).

It belongs to the universal ribosomal protein uL30 family. In terms of assembly, part of the 50S ribosomal subunit.

In Corynebacterium efficiens (strain DSM 44549 / YS-314 / AJ 12310 / JCM 11189 / NBRC 100395), this protein is Large ribosomal subunit protein uL30.